Consider the following 242-residue polypeptide: Probable transcriptional regulatory protein XAC3151 (242 aa).

It belongs to the TACO1 family.

It is found in the cytoplasm. In Xanthomonas axonopodis pv. citri (strain 306), this protein is Probable transcriptional regulatory protein XAC3151.